Here is a 212-residue protein sequence, read N- to C-terminus: Cyclin-dependent kinase 2-interacting protein (212 aa).

Met-1 is modified (N-acetylmethionine). Phosphoserine occurs at positions 69 and 73. A coiled-coil region spans residues 73–107 (SKENEEKVCLEYNEELEKLCEELQATLDGLTKIQV). Ser-202 provides a ligand contact to Na(+).

It belongs to the CINP family. In terms of assembly, homodimer. Part of the 55LCC heterohexameric ATPase complex composed at least of AIRIM, AFG2A, AFG2B and CINP. Interacts with AIRIM. Interacts with CDK2 and CDC7. Interacts with the components of the replication complex, MCM2, MCM3, MCM4, MCM5, MCM6, MCM7 and with ORC2-containing complexes. Interacts with ATRIP. Interacts with CEP152. Associates with pre-60S ribosomal particles. In terms of processing, phosphorylated by CDC7 but not by CDK2.

It localises to the nucleus. Component of the DNA replication complex, which interacts with two kinases, CDK2 and CDC7, thereby providing a functional and physical link between CDK2 and CDC7 during firing of the origins of replication. Regulates ATR-mediated checkpoint signaling in response to DNA damage. Part of the 55LCC heterohexameric ATPase complex which is chromatin-associated and promotes replisome proteostasis to maintain replication fork progression and genome stability. Required for replication fork progression, sister chromatid cohesion, and chromosome stability. The ATPase activity is specifically enhanced by replication fork DNA and is coupled to cysteine protease-dependent cleavage of replisome substrates in response to replication fork damage. Uses ATPase activity to process replisome substrates in S-phase, facilitating their proteolytic turnover from chromatin to ensure DNA replication and mitotic fidelity. As part of 55LCC complex, also involved in the cytoplasmic maturation steps of pre-60S ribosomal particles by promoting the release of shuttling protein RSL24D1/RLP24 from the pre-ribosomal particles. The chain is Cyclin-dependent kinase 2-interacting protein from Homo sapiens (Human).